A 686-amino-acid chain; its full sequence is Probable serine/threonine-protein kinase pdkA (686 aa).

The segment at 1-31 (MENIVITNTSGGGGGGVPSSSTDPPNNTTTT) is disordered. Positions 18 to 31 (PSSSTDPPNNTTTT) are enriched in low complexity. A Protein kinase domain is found at 69–449 (FIIGKVLGEG…FDNLKAHPFF (381 aa)). ATP is bound by residues 79–81 (SYG) and Lys-98. Residues 100–144 (LEKKQIIKENKIKYVQIEKEIFCKSNHPNIVKLFFTFRSEQCLYY) are PIF-pocket. Residues 147–149 (ELC) and Asp-153 each bind ATP. Residue Asp-192 is the Proton acceptor of the active site. Residues Glu-196 and Asp-210 each contribute to the ATP site. Disordered regions lie at residues 211 to 321 (FGTG…NTNT) and 481 to 584 (LFSP…NNIS). A compositionally biased stretch (low complexity) spans 222–257 (SSQQQQQQQQQQQQLPTNSSGNLSSLLNNVNNLSVS). A compositionally biased stretch (polar residues) spans 258–267 (TDLTQQQQNR). 3 stretches are compositionally biased toward low complexity: residues 268-279 (TSSVDSASTTDS), 288-321 (TTTTTNNNNNNNNNNNNNNNNTAAGSNTNTNTNT), and 503-568 (NSCN…QRSG). Residues 593–682 (VIYQGLVWKR…DSIKSVILSS (90 aa)) enclose the PH domain.

It belongs to the protein kinase superfamily. AGC Ser/Thr protein kinase family. PDPK1 subfamily.

The enzyme catalyses L-seryl-[protein] + ATP = O-phospho-L-seryl-[protein] + ADP + H(+). It catalyses the reaction L-threonyl-[protein] + ATP = O-phospho-L-threonyl-[protein] + ADP + H(+). This is Probable serine/threonine-protein kinase pdkA (pdkA) from Dictyostelium discoideum (Social amoeba).